The following is a 185-amino-acid chain: Ribosome-recycling factor (185 aa).

A compositionally biased stretch (basic and acidic residues) spans 131 to 155; the sequence is DRKNANDKIKKSEKDKEITADESKS. A disordered region spans residues 131–156; that stretch reads DRKNANDKIKKSEKDKEITADESKSA.

This sequence belongs to the RRF family.

It is found in the cytoplasm. In terms of biological role, responsible for the release of ribosomes from messenger RNA at the termination of protein biosynthesis. May increase the efficiency of translation by recycling ribosomes from one round of translation to another. The sequence is that of Ribosome-recycling factor from Sulfurimonas denitrificans (strain ATCC 33889 / DSM 1251) (Thiomicrospira denitrificans (strain ATCC 33889 / DSM 1251)).